The chain runs to 420 residues: COP9 signalosome complex subunit 11 (420 aa).

The PCI domain occupies 177–346 (SIHEHPSLVD…VYYKEDLPVG (170 aa)). Positions 386–420 (VEPLNRSQDMDAFELHEQSEDEEYEEEHLEEGENV) are disordered. The span at 404–420 (SEDEEYEEEHLEEGENV) shows a compositional bias: acidic residues.

Component of a COP9 signalosome-like (CSN) complex.

The protein localises to the cytoplasm. It is found in the nucleus. Functionally, component of the COP9 signalosome (CSN) complex that acts as an regulator of the ubiquitin (Ubl) conjugation pathway by mediating the deneddylation of the cullin subunit of SCF-type E3 ubiquitin-protein ligase complexes The CSN complex is involved in the regulation of the mating pheromone response. PCI8 may also be involved in transcriptional and translational control. The sequence is that of COP9 signalosome complex subunit 11 (PCI8) from Eremothecium gossypii (strain ATCC 10895 / CBS 109.51 / FGSC 9923 / NRRL Y-1056) (Yeast).